Reading from the N-terminus, the 279-residue chain is Large ribosomal subunit protein uL2 (279 aa).

The interval 223 to 279 is disordered; the sequence is MAMNPVDHPMGGGEGKSKSGGGRKHPKSPWGQLAKGLKTRNKKKASSKLIVRGRKSK. Gly residues predominate over residues 232-242; that stretch reads MGGGEGKSKSG. Basic residues predominate over residues 259 to 279; the sequence is LKTRNKKKASSKLIVRGRKSK.

Belongs to the universal ribosomal protein uL2 family. Part of the 50S ribosomal subunit. Forms a bridge to the 30S subunit in the 70S ribosome.

In terms of biological role, one of the primary rRNA binding proteins. Required for association of the 30S and 50S subunits to form the 70S ribosome, for tRNA binding and peptide bond formation. It has been suggested to have peptidyltransferase activity; this is somewhat controversial. Makes several contacts with the 16S rRNA in the 70S ribosome. The polypeptide is Large ribosomal subunit protein uL2 (Prosthecochloris aestuarii (strain DSM 271 / SK 413)).